The sequence spans 468 residues: ERO1-like protein alpha (468 aa).

A signal peptide spans 1-23 (MGRRWGFLIGFLVAVGLLGLGHG). 8 disulfides stabilise this stretch: Cys35-Cys48, Cys37-Cys46, Cys85-Cys391, Cys94-Cys99, Cys94-Cys131, Cys99-Cys104, Cys208-Cys241, and Cys394-Cys397. Phosphoserine occurs at positions 106, 143, and 145. Residues Arg187, Thr189, and Trp200 each coordinate FAD. Ser252 and His255 together coordinate FAD. Asn280 is a glycosylation site (N-linked (GlcNAc...) asparagine). FAD-binding residues include Arg287 and Arg300. Asn384 is a glycosylation site (N-linked (GlcNAc...) asparagine).

The protein belongs to the EROs family. As to quaternary structure, predominantly monomer. May function both as a monomer and a homodimer. Interacts with PDILT. Interacts with ERP44; the interaction results in retention of ERO1A in the endoplasmic reticulum. It depends on FAD as a cofactor. Post-translationally, the Cys-94/Cys-99 and Cys-394/Cys-397 disulfide bonds constitute the redox-active center. The Cys-94/Cys-99 disulfide bond may accept electron from P4HB and funnel them to the active site disulfide Cys-394/Cys-397. The regulatory Cys-99/Cys-104 disulfide bond stabilizes the other regulatory bond Cys-94/Cys-131. In terms of processing, phosphorylated on Ser-145 by FAM20C in the Golgi which increases its enzymatic activity. Phosphorylation is induced by lactation. It is also induced by hypoxia and reductive stress.

It localises to the endoplasmic reticulum membrane. The protein localises to the golgi apparatus lumen. It is found in the secreted. Its subcellular location is the cell projection. The protein resides in the dendrite. With respect to regulation, enzyme activity is tightly regulated to prevent the accumulation of reactive oxygen species in the endoplasmic reticulum. Reversibly down-regulated by the formation of disulfide bonds between the active site Cys-94 and Cys-131, and between Cys-99 and Cys-104. Glutathione may be required to regulate its activity in the endoplasmic reticulum. In terms of biological role, oxidoreductase involved in disulfide bond formation in the endoplasmic reticulum. Efficiently reoxidizes P4HB/PDI, the enzyme catalyzing protein disulfide formation, in order to allow P4HB to sustain additional rounds of disulfide formation. Following P4HB reoxidation, passes its electrons to molecular oxygen via FAD, leading to the production of reactive oxygen species (ROS) in the cell. Required for the proper folding of immunoglobulins. Plays an important role in ER stress-induced, CHOP-dependent apoptosis by activating the inositol 1,4,5-trisphosphate receptor IP3R1. In Bos taurus (Bovine), this protein is ERO1-like protein alpha.